A 430-amino-acid chain; its full sequence is MAKIQAIRGTKDILPDEIQYWQFIHNKISKLLECANYQEIRTPIFENSELYDRGIGEDTDIVNKEMYRFHDRSNRDITLRPEGTAGIVRSFIENKMSYHHSLQRLWYSGPMFRYERPQSGRQRQFHQLGIEFIGSLDARADSEVIHLAMSIFNNLNLHNLKLDLNSIGKVEDRSIYQVKLRDYLTKYHDDLDTDSQKRLTSNPIRILDSKDSNTQKILTEAPKISDFLSLESQQHFGDVCNYLKLLNIPYNINNKLVRGLDYYNDTAFEIKTLTSKGQDTICGGGRYDSLVHQLGGKATPAVGCAIGLERLLLIAKDNIDLPNKSIDFYIATQGTKANETGMQIMRFLHQQFFKIEIDVSSSNFSKQIKQANKKRAVACIIIGSNEIAEGIITIKWLFSQKQENITVVQLKHSVSYLKKKILFYKSSKNY.

This sequence belongs to the class-II aminoacyl-tRNA synthetase family.

The protein localises to the plastid. It localises to the chloroplast. The catalysed reaction is tRNA(His) + L-histidine + ATP = L-histidyl-tRNA(His) + AMP + diphosphate + H(+). The protein is Histidine--tRNA ligase, chloroplastic of Pyropia yezoensis (Susabi-nori).